The sequence spans 1156 residues: Reverse gyrase 1 (1156 aa).

An RG N-terminal-type zinc finger spans residues 1 to 38; that stretch reads MLKVYYTFGCPNCGGPIDDEHLLAGVPCSKCLPGRVEN. Residues cysteine 10, cysteine 13, cysteine 28, and cysteine 31 each coordinate Zn(2+). ATP-binding positions include glutamine 86 and 103-110; that span reads APTGLGKT. A Helicase ATP-binding domain is found at 90–277; the sequence is IKRLAKSESF…ALRTLIGFEP (188 aa). A DEAD box motif is present at residues 184-187; sequence DDSD. The interval 570–1156 is topoisomerase I; sequence INIKTILLIV…VNSLKLDTNV (587 aa). Residues 574-736 enclose the Toprim domain; sequence TILLIVESPT…NIYRIKYHEI (163 aa). Glutamate 580 serves as a coordination point for Mg(2+). The segment at 655–682 adopts an RG C-terminal-type zinc-finger fold; that stretch reads IYKCYNCGKTFTIKSNTCPYCGSVFISS. Zn(2+)-binding residues include cysteine 658, cysteine 661, cysteine 672, and cysteine 675. Aspartate 705 is a binding site for Mg(2+). Residues 752–1143 form the Topo IA-type catalytic domain; it reads NMNLVKSQIV…DLHKEITQIS (392 aa). The active-site O-(5'-phospho-DNA)-tyrosine intermediate is the tyrosine 895.

The protein in the N-terminal section; belongs to the DEAD box helicase family. DDVD subfamily. It in the C-terminal section; belongs to the type IA topoisomerase family. In terms of assembly, monomer. It depends on Zn(2+) as a cofactor. The cofactor is Mg(2+).

The protein resides in the cytoplasm. It catalyses the reaction ATP + H2O = ADP + phosphate + H(+). In terms of biological role, modifies the topological state of DNA by introducing positive supercoils in an ATP-dependent process, increasing the linking number in steps of +1. Binds to single-stranded DNA, transiently cleaves and then rejoins the ends, introducing a positive supercoil in the process. The scissile phosphodiester is attacked by the catalytic tyrosine of the enzyme, resulting in the formation of a DNA-(5'-phosphotyrosyl)-enzyme intermediate. Probably involved in rewinding DNA strands in regions of the chromosome that have opened up to allow replication, transcription, DNA repair and/or for DNA protection. In Sulfurisphaera tokodaii (strain DSM 16993 / JCM 10545 / NBRC 100140 / 7) (Sulfolobus tokodaii), this protein is Reverse gyrase 1.